The following is a 1129-amino-acid chain: Serine/threonine-protein kinase 11-interacting protein (1129 aa).

LRR repeat units lie at residues 107–128, 130–150, 162–183, 185–206, 208–229, 232–253, 254–275, and 279–300; these read SLRSLELRCLPPHCLRGLRSVY, QLEVLTCYRCVSSLEEVIALC, VLHTLDFSYNTLKNLDGSLELL, SLKILDLSHNQITECGSYLKVL, ELQYLNLGYNHLTAVPELSVGN, KLHSLILKHNQLSGTSGLENLP, NLQHLDLSYNLLLEHSQLSGLA, and NLKQLFLEGNPLYFQKDYRALT. 4 disordered regions span residues 335-392, 428-475, 654-678, and 696-724; these read RLQP…RRGQ, DPEY…HVAP, GDIYSPESLQQGKEPTAGLHRNHTG, and NPTGETSTPLRPLSAEPPQGDDGGGGLAA. Residues 337 to 355 show a composition bias toward polar residues; sequence QPSSSATESSCTGDLTDSY. A compositionally biased stretch (basic residues) spans 365 to 374; the sequence is LPRKKSRVKV. Residues 381–391 show a composition bias toward basic and acidic residues; it reads ERSDSEYERRG. The segment covering 436–447 has biased composition (pro residues); the sequence is HSPPPRASPSPT. Low complexity predominate over residues 448 to 458; sequence APSSVPKQKSP.

It belongs to the STK11IP family.

The protein resides in the cytoplasm. The sequence is that of Serine/threonine-protein kinase 11-interacting protein (stk11ip) from Xenopus tropicalis (Western clawed frog).